A 62-amino-acid chain; its full sequence is Protein DsrB (62 aa).

The protein belongs to the DsrB family.

In Escherichia fergusonii (strain ATCC 35469 / DSM 13698 / CCUG 18766 / IAM 14443 / JCM 21226 / LMG 7866 / NBRC 102419 / NCTC 12128 / CDC 0568-73), this protein is Protein DsrB.